Here is a 416-residue protein sequence, read N- to C-terminus: Sulfoquinovosyl glycerol-binding protein SmoF (416 aa).

A signal peptide spans 1 to 29 (MTLKTIRGKALMGAALCATMLTFSGQAFA). 3-(6-sulfo-alpha-D-quinovosyl)glycerol is bound at residue Q40. H41 is a binding site for 6-sulfo-D-quinovose. 8 residues coordinate 3-(6-sulfo-alpha-D-quinovosyl)glycerol: S71, D95, D141, G194, T248, G303, W304, and R373. Positions 303, 304, and 373 each coordinate 6-sulfo-D-quinovose.

The protein belongs to the bacterial solute-binding protein 1 family. The complex is probably composed of two ATP-binding proteins (SmoE), two transmembrane proteins (SmoG and SmoH) and a solute-binding protein (SmoF).

The protein localises to the periplasm. In terms of biological role, part of the ABC transporter complex SmoEFGH involved in sulfoquinovosyl glycerol (SQGro) uptake. Binds sulfoquinovosyl glycerol (SQGro). Can also bind sulfoquinovose (SQ), methyl alpha-sulfoquinovoside (SQMe) and a short-chain derivative of sulfoquinovosyl diacylglycerol (SQDG). Cannot bind D-glucose and D-glucuronic acid. The chain is Sulfoquinovosyl glycerol-binding protein SmoF from Agrobacterium fabrum (strain C58 / ATCC 33970) (Agrobacterium tumefaciens (strain C58)).